The sequence spans 417 residues: Phosphoglycerate kinase 2 (417 aa).

Serine 4 carries the post-translational modification Phosphoserine. An N6-acetyllysine modification is found at lysine 11. Residues valine 23, aspartate 24, phenylalanine 25, asparagine 26, glutamine 38, and arginine 39 each contribute to the (2R)-3-phosphoglycerate site. An N6-acetyllysine modification is found at lysine 48. (2R)-3-phosphoglycerate is bound by residues serine 62, histidine 63, glycine 65, and arginine 66. Lysine 75, lysine 86, and lysine 97 each carry N6-acetyllysine. Residues leucine 122 and arginine 123 each coordinate (2R)-3-phosphoglycerate. N6-acetyllysine is present on residues lysine 131 and lysine 146. Residues histidine 170 and arginine 171 each coordinate (2R)-3-phosphoglycerate. Position 196 is a phosphotyrosine (tyrosine 196). Lysine 199 carries the N6-acetyllysine modification. Residue glycine 214 participates in ADP binding. Glycine 214 serves as a coordination point for CDP. Residues alanine 215 and lysine 216 each contribute to the AMP site. Alanine 215 lines the ATP pocket. Alanine 215 contacts Mg(2+). Position 219 (aspartate 219) interacts with CDP. A Mg(2+)-binding site is contributed by aspartate 219. Residue lysine 220 coordinates AMP. Residue lysine 220 participates in ATP binding. Glycine 238 provides a ligand contact to ADP. Residue glycine 238 coordinates CDP. AMP is bound at residue glycine 239. An ATP-binding site is contributed by glycine 239. Residues lysine 267 and lysine 291 each carry the N6-acetyllysine modification. Position 313 (glycine 313) interacts with AMP. Glycine 313 lines the ATP pocket. Residues glycine 338, isoleucine 340, and phenylalanine 343 each contribute to the CDP site. An ADP-binding site is contributed by phenylalanine 343. Glutamate 344 contacts AMP. Glutamate 344, aspartate 375, and threonine 376 together coordinate ATP. A Mg(2+)-binding site is contributed by aspartate 375.

The protein belongs to the phosphoglycerate kinase family. Monomer. Mg(2+) serves as cofactor. In terms of tissue distribution, testis and sperm. Localized on the principle piece in the sperm (at protein level). Testis-specific.

The protein resides in the cytoplasm. It carries out the reaction (2R)-3-phosphoglycerate + ATP = (2R)-3-phospho-glyceroyl phosphate + ADP. The protein operates within carbohydrate degradation; glycolysis; pyruvate from D-glyceraldehyde 3-phosphate: step 2/5. Its function is as follows. Essential for sperm motility and male fertility but is not required for the completion of spermatogenesis. The polypeptide is Phosphoglycerate kinase 2 (Pgk2) (Mus musculus (Mouse)).